The following is a 105-amino-acid chain: Large ribosomal subunit protein uL24 (105 aa).

It belongs to the universal ribosomal protein uL24 family. In terms of assembly, part of the 50S ribosomal subunit.

Functionally, one of two assembly initiator proteins, it binds directly to the 5'-end of the 23S rRNA, where it nucleates assembly of the 50S subunit. Its function is as follows. One of the proteins that surrounds the polypeptide exit tunnel on the outside of the subunit. In Dictyoglomus thermophilum (strain ATCC 35947 / DSM 3960 / H-6-12), this protein is Large ribosomal subunit protein uL24.